The sequence spans 100 residues: Large ribosomal subunit protein uL23 (100 aa).

It belongs to the universal ribosomal protein uL23 family. As to quaternary structure, part of the 50S ribosomal subunit. Contacts protein L29, and trigger factor when it is bound to the ribosome.

One of the early assembly proteins it binds 23S rRNA. One of the proteins that surrounds the polypeptide exit tunnel on the outside of the ribosome. Forms the main docking site for trigger factor binding to the ribosome. The polypeptide is Large ribosomal subunit protein uL23 (Proteus mirabilis (strain HI4320)).